Here is a 247-residue protein sequence, read N- to C-terminus: Exosome complex component Rrp4 (247 aa).

The S1 motif domain occupies 70-143; sequence GDTVIGLIED…INPILSIKGK (74 aa). The region spanning 149–211 is the KH domain; sequence SSGIVIDIPP…EALVEAIQII (63 aa).

This sequence belongs to the RRP4 family. As to quaternary structure, component of the archaeal exosome complex. Forms a trimer of Rrp4 and/or Csl4 subunits. The trimer associates with a hexameric ring-like arrangement composed of 3 Rrp41-Rrp42 heterodimers.

The protein localises to the cytoplasm. Its function is as follows. Non-catalytic component of the exosome, which is a complex involved in RNA degradation. Increases the RNA binding and the efficiency of RNA degradation. Confers strong poly(A) specificity to the exosome. In Sulfurisphaera tokodaii (strain DSM 16993 / JCM 10545 / NBRC 100140 / 7) (Sulfolobus tokodaii), this protein is Exosome complex component Rrp4.